Consider the following 795-residue polypeptide: ATP-dependent RNA helicase DHX15 (795 aa).

The tract at residues 1–108 (MSKRHRLDLG…HSTHAGHAGH (108 aa)) is disordered. Serine 15 carries the post-translational modification Phosphoserine. Basic and acidic residues predominate over residues 20–62 (AGTDGKDRDRDRDREDRSKDRDRERDRGDREREREKEKEKELR). A compositionally biased stretch (low complexity) spans 79-108 (ASHSAHSTHSAHSAHSTHSAHSTHAGHAGH). The region spanning 147–313 (TDILVRHQSF…FDNCPLLTIP (167 aa)) is the Helicase ATP-binding domain. ATP is bound at residue 160-167 (GETGSGKT). Residues 260–263 (DEAH) carry the DEAH box motif. A Helicase C-terminal domain is found at 338–518 (TVIQIHMCEE…SVVLQLKKLG (181 aa)). Residue lysine 488 is modified to N6-acetyllysine. Residue lysine 786 forms a Glycyl lysine isopeptide (Lys-Gly) (interchain with G-Cter in SUMO2) linkage.

Belongs to the DEAD box helicase family. DEAH subfamily. DDX15/PRP43 sub-subfamily. In terms of assembly, component of the U11/U12 snRNPs that are part of the U12-type spliceosome. Identified in the Intron Large spliceosome complex (IL, also named intron lariat spliceosome), a post-mRNA release spliceosomal complex containing the excised intron, U2, U5 and U6 snRNPs, and splicing factors; the association may be transient. The IL complex exists in two distinct conformations, one with the DHX15 (ILS2) and one without (ILS1). Interacts with TFIP11 (via G-patch domain); indicative for a recruitment to the IL complex. Interacts with SSB/La. Interacts with GPATCH2 (via G-patch domain); promoting the RNA helicase activity. Interacts with NKRF (via G-patch domain); promoting the RNA helicase activity. Interacts with NLRP6.

It is found in the nucleus. Its subcellular location is the nucleolus. It carries out the reaction ATP + H2O = ADP + phosphate + H(+). With respect to regulation, ATPase activity is enhanced upon binding to G-patch domain-containing proteins. G-patch domain-containing proteins act like a brace that tethers mobile sections of DHX15 together, stabilizing a functional conformation with high RNA affinity, thereby promoting the ATPase activity. In terms of biological role, RNA helicase involved in mRNA processing and antiviral innate immunity. Pre-mRNA processing factor involved in disassembly of spliceosomes after the release of mature mRNA. In cooperation with TFIP11 seem to be involved in the transition of the U2, U5 and U6 snRNP-containing IL complex to the snRNP-free IS complex leading to efficient debranching and turnover of excised introns. Plays a key role in antiviral innate immunity by promoting both MAVS-dependent signaling and NLRP6 inflammasome. Acts as an RNA virus sensor: recognizes and binds viral double stranded RNA (dsRNA) and activates the MAVS-dependent signaling to produce interferon-beta and interferon lambda-3 (IFNL3). Involved in intestinal antiviral innate immunity together with NLRP6: recognizes and binds viral dsRNA and promotes activation of the NLRP6 inflammasome in intestinal epithelial cells to restrict infection by enteric viruses. The NLRP6 inflammasome acts by promoting maturation and secretion of IL18 in the extracellular milieu. Also involved in antibacterial innate immunity by promoting Wnt-induced antimicrobial protein expression in Paneth cells. The chain is ATP-dependent RNA helicase DHX15 from Pongo abelii (Sumatran orangutan).